A 214-amino-acid polypeptide reads, in one-letter code: Ribosomal RNA small subunit methyltransferase G (214 aa).

S-adenosyl-L-methionine contacts are provided by residues G81, M86, 132 to 133 (VE), and R147.

The protein belongs to the methyltransferase superfamily. RNA methyltransferase RsmG family.

The protein localises to the cytoplasm. It catalyses the reaction guanosine(527) in 16S rRNA + S-adenosyl-L-methionine = N(7)-methylguanosine(527) in 16S rRNA + S-adenosyl-L-homocysteine. In terms of biological role, specifically methylates the N7 position of guanine in position 527 of 16S rRNA. This chain is Ribosomal RNA small subunit methyltransferase G, found in Pseudomonas aeruginosa (strain UCBPP-PA14).